Here is a 365-residue protein sequence, read N- to C-terminus: Flagellar P-ring protein (365 aa).

Residues 1–19 (MIKFLSALILLLVITAAQA) form the signal peptide.

Belongs to the FlgI family. The basal body constitutes a major portion of the flagellar organelle and consists of four rings (L,P,S, and M) mounted on a central rod.

Its subcellular location is the periplasm. The protein resides in the bacterial flagellum basal body. Its function is as follows. Assembles around the rod to form the L-ring and probably protects the motor/basal body from shearing forces during rotation. The polypeptide is Flagellar P-ring protein (Escherichia coli O81 (strain ED1a)).